We begin with the raw amino-acid sequence, 157 residues long: Acetyltransferase PseH (157 aa).

The N-acetyltransferase domain maps to lysine 5–cysteine 152.

In terms of biological role, catalyzes the third step in the biosynthesis of pseudaminic acid, a sialic-acid-like sugar that is used to modify flagellin. Mediates N-4 acetylation of UDP-4-amino-4,6-dideoxy-beta-L-AltNAc to form UDP-2,4-diacetamido-2,4,6-trideoxy-beta-L-altropyranose. In Campylobacter jejuni subsp. jejuni serotype O:2 (strain ATCC 700819 / NCTC 11168), this protein is Acetyltransferase PseH (pseH).